A 364-amino-acid chain; its full sequence is 4-hydroxythreonine-4-phosphate dehydrogenase (364 aa).

Residues His148 and Thr149 each contribute to the substrate site. 3 residues coordinate a divalent metal cation: His177, His216, and His301. Positions 309, 318, and 327 each coordinate substrate.

It belongs to the PdxA family. Homodimer. It depends on Zn(2+) as a cofactor. Mg(2+) is required as a cofactor. The cofactor is Co(2+).

Its subcellular location is the cytoplasm. The enzyme catalyses 4-(phosphooxy)-L-threonine + NAD(+) = 3-amino-2-oxopropyl phosphate + CO2 + NADH. Its pathway is cofactor biosynthesis; pyridoxine 5'-phosphate biosynthesis; pyridoxine 5'-phosphate from D-erythrose 4-phosphate: step 4/5. Catalyzes the NAD(P)-dependent oxidation of 4-(phosphooxy)-L-threonine (HTP) into 2-amino-3-oxo-4-(phosphooxy)butyric acid which spontaneously decarboxylates to form 3-amino-2-oxopropyl phosphate (AHAP). This is 4-hydroxythreonine-4-phosphate dehydrogenase from Campylobacter jejuni subsp. jejuni serotype O:2 (strain ATCC 700819 / NCTC 11168).